The primary structure comprises 451 residues: Chromosomal replication initiator protein DnaA (451 aa).

The interval 1-94 (MKPDLSSLWQ…KPEPKPAQPS (94 aa)) is domain I, interacts with DnaA modulators. The interval 87-106 (EPKPAQPSALPTHHNKEENK) is disordered. The segment at 95-113 (ALPTHHNKEENKPQTVIRS) is domain II. The tract at residues 114 to 331 (YLNPKHVFEN…GALNRVSANA (218 aa)) is domain III, AAA+ region. Residues glycine 159, glycine 161, lysine 162, and threonine 163 each coordinate ATP. A domain IV, binds dsDNA region spans residues 332 to 451 (EFMGAAITID…WSNLIRTLSV (120 aa)).

The protein belongs to the DnaA family. In terms of assembly, oligomerizes as a right-handed, spiral filament on DNA at oriC.

The protein localises to the cytoplasm. In terms of biological role, plays an essential role in the initiation and regulation of chromosomal replication. ATP-DnaA binds to the origin of replication (oriC) to initiate formation of the DNA replication initiation complex once per cell cycle. Binds the DnaA box (a 9 base pair repeat at the origin) and separates the double-stranded (ds)DNA. Forms a right-handed helical filament on oriC DNA; dsDNA binds to the exterior of the filament while single-stranded (ss)DNA is stabiized in the filament's interior. The ATP-DnaA-oriC complex binds and stabilizes one strand of the AT-rich DNA unwinding element (DUE), permitting loading of DNA polymerase. After initiation quickly degrades to an ADP-DnaA complex that is not apt for DNA replication. Binds acidic phospholipids. This Pasteurella multocida (strain Pm70) protein is Chromosomal replication initiator protein DnaA.